A 366-amino-acid chain; its full sequence is Chorismate synthase (366 aa).

Residues arginine 48 and arginine 54 each contribute to the NADP(+) site. FMN is bound by residues 125–127 (RSS), 238–239 (NA), glycine 278, 293–297 (KPTSS), and arginine 319.

Belongs to the chorismate synthase family. In terms of assembly, homotetramer. The cofactor is FMNH2.

It catalyses the reaction 5-O-(1-carboxyvinyl)-3-phosphoshikimate = chorismate + phosphate. It participates in metabolic intermediate biosynthesis; chorismate biosynthesis; chorismate from D-erythrose 4-phosphate and phosphoenolpyruvate: step 7/7. Catalyzes the anti-1,4-elimination of the C-3 phosphate and the C-6 proR hydrogen from 5-enolpyruvylshikimate-3-phosphate (EPSP) to yield chorismate, which is the branch point compound that serves as the starting substrate for the three terminal pathways of aromatic amino acid biosynthesis. This reaction introduces a second double bond into the aromatic ring system. The chain is Chorismate synthase from Neisseria meningitidis serogroup B (strain ATCC BAA-335 / MC58).